A 392-amino-acid polypeptide reads, in one-letter code: Adenine nucleotide transporter BT1, chloroplastic/mitochondrial (392 aa).

3 Solcar repeats span residues 108 to 191 (NPSL…VNKK), 202 to 286 (IPIP…LRKA), and 296 to 384 (IGNI…CKKI). Transmembrane regions (helical) follow at residues 113–133 (RLLSGAVAGAVSRTVVAPLET), 168–188 (LVNVIRVAPARAVELFVFETV), 204–224 (IPASLLAGACAGVSQTLLTYP), 263–283 (APSLIGVVPYAATNYFAYDSL), 302–322 (LLIGSLAGALSSTATFPLEVA), and 359–379 (GLGPSCLKLVPAAGISFMCYE).

It belongs to the mitochondrial carrier (TC 2.A.29) family. Expressed in root tips, the central cylinder of young roots, and maturating and germinating pollen.

It localises to the plastid. It is found in the chloroplast inner membrane. Its subcellular location is the mitochondrion inner membrane. Inhibited by pyridoxal 5-phosphate but not mersalyl. Probable mitochondrial adenylate carrier that catalyzes the transport of ATP, ADP and AMP, but not ADP-glucose. Recombinant BT1 shows a unidirectional mode of transport in intact E.coli cells. May function as a plastidial nucleotide uniport carrier required to export newly synthesized adenylates into the cytosol. May be involved in abiotic stress response. The polypeptide is Adenine nucleotide transporter BT1, chloroplastic/mitochondrial (BT1) (Arabidopsis thaliana (Mouse-ear cress)).